A 472-amino-acid polypeptide reads, in one-letter code: Ribulose bisphosphate carboxylase large chain 1 (472 aa).

Residues N115 and T165 each contribute to the substrate site. The active-site Proton acceptor is K167. K169 is a substrate binding site. Mg(2+) contacts are provided by K193, D195, and E196. K193 carries the N6-carboxylysine modification. Catalysis depends on H286, which acts as the Proton acceptor. Substrate-binding residues include R287, H319, and S371.

This sequence belongs to the RuBisCO large chain family. Type I subfamily. Heterohexadecamer of 8 large chains and 8 small chains. Mg(2+) serves as cofactor.

It catalyses the reaction 2 (2R)-3-phosphoglycerate + 2 H(+) = D-ribulose 1,5-bisphosphate + CO2 + H2O. The catalysed reaction is D-ribulose 1,5-bisphosphate + O2 = 2-phosphoglycolate + (2R)-3-phosphoglycerate + 2 H(+). Its function is as follows. RuBisCO catalyzes two reactions: the carboxylation of D-ribulose 1,5-bisphosphate, the primary event in carbon dioxide fixation, as well as the oxidative fragmentation of the pentose substrate. Both reactions occur simultaneously and in competition at the same active site. This chain is Ribulose bisphosphate carboxylase large chain 1, found in Allochromatium vinosum (strain ATCC 17899 / DSM 180 / NBRC 103801 / NCIMB 10441 / D) (Chromatium vinosum).